The primary structure comprises 395 residues: Flap endonuclease 1 (395 aa).

Residues 1–104 form an N-domain region; it reads MGIKHLYQVI…GELAKRSARK (104 aa). Aspartate 34 contributes to the Mg(2+) binding site. Residues arginine 47 and arginine 70 each contribute to the DNA site. Aspartate 86 serves as a coordination point for Mg(2+). The interval 99–126 is disordered; it reads KRSARKREAHEAHEEAKETGTAEDMEKF. The I-domain stretch occupies residues 122 to 253; it reads DMEKFSRRTV…NTALKLIREH (132 aa). Residues glutamate 158, glutamate 160, aspartate 179, and aspartate 181 each contribute to the Mg(2+) site. Glutamate 158 is a DNA binding site. DNA is bound by residues glycine 231 and aspartate 233. Aspartate 233 provides a ligand contact to Mg(2+). Positions 341 to 349 are interaction with PCNA; it reads QQSRLEGFF. The segment covering 356-389 has biased composition (basic and acidic residues); that stretch reads EAEKASLKRKHDEKIEEQKKRKKEEAKAKKEAKA. The tract at residues 356 to 395 is disordered; it reads EAEKASLKRKHDEKIEEQKKRKKEEAKAKKEAKARPRGAV.

The protein belongs to the XPG/RAD2 endonuclease family. FEN1 subfamily. Interacts with PCNA. Three molecules of fen1 bind to one PCNA trimer with each molecule binding to one PCNA monomer. PCNA stimulates the nuclease activity without altering cleavage specificity. The cofactor is Mg(2+). Post-translationally, phosphorylated. Phosphorylation upon DNA damage induces relocalization to the nuclear plasma.

It is found in the nucleus. It localises to the nucleolus. The protein resides in the nucleoplasm. The protein localises to the mitochondrion. In terms of biological role, structure-specific nuclease with 5'-flap endonuclease and 5'-3' exonuclease activities involved in DNA replication and repair. During DNA replication, cleaves the 5'-overhanging flap structure that is generated by displacement synthesis when DNA polymerase encounters the 5'-end of a downstream Okazaki fragment. It enters the flap from the 5'-end and then tracks to cleave the flap base, leaving a nick for ligation. Also involved in the long patch base excision repair (LP-BER) pathway, by cleaving within the apurinic/apyrimidinic (AP) site-terminated flap. Acts as a genome stabilization factor that prevents flaps from equilibrating into structures that lead to duplications and deletions. Also possesses 5'-3' exonuclease activity on nicked or gapped double-stranded DNA, and exhibits RNase H activity. Also involved in replication and repair of rDNA and in repairing mitochondrial DNA. The sequence is that of Flap endonuclease 1 (fen1) from Talaromyces stipitatus (strain ATCC 10500 / CBS 375.48 / QM 6759 / NRRL 1006) (Penicillium stipitatum).